The following is a 247-amino-acid chain: MVLIKRYFIKKAMVQTQIDEYLAKRFYRAGYAGVQIIQFPLGTRVIIYAERPAMIIGRRGETIRQLAAIFEHEFGLSNPQITVRRVENPDLNARVVASRIAVLLERGAYYRRVANVMARRVLNAGAIGVQIVISGKLRTERARYEKVRRGKVYTTGHQVEYMVDRAVMHVTLKPGVLGIEVMIVKPAKPSDYVRIKQPEEVKEFIEQVRSELEKARAAEAAAAVAQQGEVVGEAPNTPLEEQGQKQG.

The KH type-2 domain occupies 18-87 (IDEYLAKRFY…NPQITVRRVE (70 aa)). Residues 226-247 (QQGEVVGEAPNTPLEEQGQKQG) are disordered.

Belongs to the universal ribosomal protein uS3 family. Part of the 30S ribosomal subunit.

Functionally, binds the lower part of the 30S subunit head. This is Small ribosomal subunit protein uS3 from Hyperthermus butylicus (strain DSM 5456 / JCM 9403 / PLM1-5).